Here is a 217-residue protein sequence, read N- to C-terminus: 3,4-dihydroxy-2-butanone 4-phosphate synthase (217 aa).

D-ribulose 5-phosphate is bound by residues R37–E38, D42, R150–T154, and E174. E38 is a binding site for Mg(2+). A Mg(2+)-binding site is contributed by H153.

The protein belongs to the DHBP synthase family. In terms of assembly, homodimer. Mg(2+) serves as cofactor. It depends on Mn(2+) as a cofactor.

The enzyme catalyses D-ribulose 5-phosphate = (2S)-2-hydroxy-3-oxobutyl phosphate + formate + H(+). It participates in cofactor biosynthesis; riboflavin biosynthesis; 2-hydroxy-3-oxobutyl phosphate from D-ribulose 5-phosphate: step 1/1. Catalyzes the conversion of D-ribulose 5-phosphate to formate and 3,4-dihydroxy-2-butanone 4-phosphate. In Shigella boydii serotype 18 (strain CDC 3083-94 / BS512), this protein is 3,4-dihydroxy-2-butanone 4-phosphate synthase.